Consider the following 330-residue polypeptide: MNLQQKLAQFPRLDLVGSATPLEKLSRLSDYLGREIYIKRDDVTPMAMGGNKLRKLEFLAADALRQGADTLVTAGAIQSNHVRQTAAVAAKLGLHCVALLENPIDTQEENYLTNGNRLLLGLFNAQVEMCEALHDPQQQLADLATRLEAQGFRPYVVPVGGSNALGALGYVQCALEIAEQSQRSNVAFSSVVVASGSAGTHAGLAVGLQQLLPETELVGVTVSRKVIDQLPKVEQIQKALANSLAIDELAPITLWDDYFAPQYGMPNEEGLAAIQLLAQQEGVLLDPVYSGKAMAGLIDGVAQQRFRDDGPILFIHTGGAPALFAYHPQV.

An N6-(pyridoxal phosphate)lysine modification is found at Lys-52.

Belongs to the ACC deaminase/D-cysteine desulfhydrase family. Homodimer. Pyridoxal 5'-phosphate serves as cofactor.

The enzyme catalyses D-cysteine + H2O = hydrogen sulfide + pyruvate + NH4(+) + H(+). Catalyzes the alpha,beta-elimination reaction of D-cysteine and of several D-cysteine derivatives. It could be a defense mechanism against D-cysteine. The polypeptide is D-cysteine desulfhydrase (Serratia proteamaculans (strain 568)).